Reading from the N-terminus, the 786-residue chain is m7GpppN-mRNA hydrolase dcap-2 (786 aa).

Polar residues predominate over residues 25–61 (QKQNKSTEEPPSSVQKLLASLQQAQNKSDLSEQPSTS). The segment at 25–148 (QKQNKSTEEP…QQQQQYKGPR (124 aa)) is disordered. The span at 62–72 (KPKKNEKRKKA) shows a compositional bias: basic residues. Composition is skewed to polar residues over residues 101 to 111 (MQQQAENARIS) and 118 to 133 (QVST…TAPE). A compositionally biased stretch (low complexity) spans 134 to 144 (QQNYQQQQQQY). In terms of domain architecture, Nudix hydrolase spans 238–366 (STVPTYGAIL…LPAYLQGNKF (129 aa)). Residues 273–294 (GKINQAEPPRDAAIRETFEETG) carry the Nudix box motif. Glu288 and Glu292 together coordinate Mg(2+). Disordered regions lie at residues 556 to 576 (IMHS…TPTA) and 623 to 655 (ISST…SSQV). Polar residues-rich tracts occupy residues 623-632 (ISSTQKQSIP) and 646-655 (SASLSGSSQV).

It belongs to the Nudix hydrolase family. DCP2 subfamily. In terms of assembly, may be a component of the decapping complex composed of dcap-1 and dcap-2. It depends on Mg(2+) as a cofactor. The cofactor is Mn(2+). As to expression, expressed in sensory neurons.

The protein resides in the cytoplasmic granule. It is found in the cytoplasm. Its subcellular location is the perinuclear region. It catalyses the reaction a 5'-end (N(7)-methyl 5'-triphosphoguanosine)-ribonucleoside in mRNA + H2O = N(7)-methyl-GDP + a 5'-end phospho-ribonucleoside in mRNA + 2 H(+). The catalysed reaction is a 5'-end (N(2),N(2),N(7)-trimethyl 5'-triphosphoguanosine)-ribonucleoside in mRNA + H2O = N(2),N(2),N(7)-trimethyl-GDP + a 5'-end phospho-ribonucleoside in mRNA + 2 H(+). Inhibited by capped and uncapped RNA. Not inhibited by dinucleotide cap or methylated nucleotide analogs. Decapping metalloenzyme that catalyzes the cleavage of the cap structure on mRNAs. Removes the 7-methyl guanine cap structure from mRNA molecules, yielding a 5'-phosphorylated mRNA fragment and 7m-GDP. RNA-decapping enzyme although it does not bind the RNA cap. May contribute to gene regulation in multiple RNA pathways including monomethylguanosine- and trimethylguanosine-capped RNAs. In oocytes, may play a role in the response to stress induced by heat shock, osmotic stress and anoxia. Required for the developmental axon guidance and regrowth of PLM touch receptor neurons. Early in embryogenesis, plays a role in ciliary shape formation in sensory neurons. Promotes survival at high temperatures. The protein is m7GpppN-mRNA hydrolase dcap-2 of Caenorhabditis elegans.